Consider the following 588-residue polypeptide: Mitochondrial tRNA methylthiotransferase CDK5RAP1 (588 aa).

Residues 1 to 30 constitute a mitochondrion transit peptide; the sequence is MHPLRCVLQVQRLSAPFTSMCWVLLRTCRA. 2 disordered regions span residues 33-53 and 70-91; these read SVSS…QKDF and ASVP…YLSG. In terms of domain architecture, MTTase N-terminal spans 99–219; the sequence is RKVYLETYGC…LPRLLAVVES (121 aa). [4Fe-4S] cluster is bound by residues Cys108, Cys144, Cys182, Cys257, Cys261, and Cys264. The Radical SAM core domain occupies 243–498; that stretch reads SPSATSAFVS…TVFREEASKA (256 aa). The region spanning 500–575 is the TRAM domain; the sequence is KTSVGCSQLV…SQTLKGHILC (76 aa).

Belongs to the methylthiotransferase family. MiaB subfamily. As to quaternary structure, interacts with CDK5R1 (p35 form). CDK5RAP1, CDK5RAP2 and CDK5RAP3 show competitive binding to CDK5R1. Probably forms a complex with CDK5R1 and CDK5. It depends on [4Fe-4S] cluster as a cofactor. In terms of tissue distribution, expressed in brain, liver, skeletal muscle and heart.

The protein resides in the mitochondrion. The catalysed reaction is N(6)-dimethylallyladenosine(37) in tRNA + (sulfur carrier)-SH + AH2 + 2 S-adenosyl-L-methionine = 2-methylsulfanyl-N(6)-dimethylallyladenosine(37) in tRNA + (sulfur carrier)-H + 5'-deoxyadenosine + L-methionine + A + S-adenosyl-L-homocysteine + 2 H(+). Methylthiotransferase that catalyzes the conversion of N6-(dimethylallyl)adenosine (i(6)A) to 2-methylthio-N6-(dimethylallyl)adenosine (ms(2)i(6)A) at position 37 (adjacent to the 3'-end of the anticodon) of four mitochondrial DNA-encoded tRNAs (Ser(UCN), Phe, Tyr and Trp). Essential for efficient and highly accurate protein translation by the ribosome. Specifically inhibits CDK5 activation by CDK5R1. Essential for efficient mitochondrial protein synthesis and respiratory chain. In Mus musculus (Mouse), this protein is Mitochondrial tRNA methylthiotransferase CDK5RAP1.